Consider the following 877-residue polypeptide: GPI inositol-deacylase (877 aa).

A helical transmembrane segment spans residues 35–55; that stretch reads FLSRLFCALAVLFSYSIYQSF. Ser206 is a catalytic residue. N-linked (GlcNAc...) asparagine glycans are attached at residues Asn291, Asn336, Asn374, Asn448, and Asn473. A run of 8 helical transmembrane segments spans residues 597 to 617, 637 to 657, 674 to 694, 735 to 755, 771 to 791, 809 to 829, 834 to 854, and 857 to 877; these read VLAW…SDFI, MPIC…LPDF, PLVG…SFVI, VLVN…ILLW, ISTC…HVAI, NFYY…GGTI, VCLK…FSVG, and WTWI…ASII.

Belongs to the GPI inositol-deacylase family.

It is found in the endoplasmic reticulum membrane. Its function is as follows. Involved in inositol deacylation of GPI-anchored proteins which plays important roles in the quality control and ER-associated degradation of GPI-anchored proteins. This is GPI inositol-deacylase (BST1) from Cryptococcus neoformans var. neoformans serotype D (strain JEC21 / ATCC MYA-565) (Filobasidiella neoformans).